Here is a 497-residue protein sequence, read N- to C-terminus: L-asparagine permease (497 aa).

12 helical membrane passes run 34–54 (QVQMIAIGGAIGTGLFLGAGA), 58–78 (MAGPALALVYLICGIFSFFIL), 109–129 (VAGWMYFINWAMTGIVDITAV), 146–166 (VFALGALTIVGTMNMIGVKWF), 171–191 (FWFALIKVLAIVIFLVVGTIF), 219–239 (LLPALVLIQGVVFAFASIELV), 264–284 (IGLFYVGSVVLLVLLLPWNAY), 298–318 (LGVPYIGSIMNIVVLTAALSS), 353–373 (YAGILATLVVYVVGVFLNYLV), 378–398 (FEIVLNFASLGIIASWAFIMV), 422–442 (APFTSWLTLLFLLSVLVLMAF), and 448–468 (TYTIASLPLIAILLVAGWFGV).

The protein belongs to the amino acid-polyamine-organocation (APC) superfamily. Amino acid transporter (AAT) (TC 2.A.3.1) family.

Its subcellular location is the cell inner membrane. The protein is L-asparagine permease (ansP) of Salmonella typhimurium (strain LT2 / SGSC1412 / ATCC 700720).